The chain runs to 630 residues: Chaperone protein HtpG (630 aa).

Positions 1–327 (MSVETYKFDA…SEDLSLNISR (327 aa)) are a; substrate-binding. The segment at 328–551 (ETLQHSPLID…EGSMDIRTER (224 aa)) is b. The span at 483–499 (TKTAKSSDTNNDGKDDT) shows a compositional bias: basic and acidic residues. Positions 483–504 (TKTAKSSDTNNDGKDDTSSSDD) are disordered. Positions 552–630 (FLIEQKQLSS…INFFIEKSVN (79 aa)) are c.

It belongs to the heat shock protein 90 family. As to quaternary structure, homodimer.

The protein localises to the cytoplasm. Functionally, molecular chaperone. Has ATPase activity. The chain is Chaperone protein HtpG from Orientia tsutsugamushi (strain Boryong) (Rickettsia tsutsugamushi).